The chain runs to 269 residues: MSNVRHHEGSVTIEISNQLSEVLSVIERHSGINVAGRAFVRSAVDGGLKPYSDIDLLVTVAVKLDETTRRALLNDLMEASAFPGESETLRAIEVTLVVHDDIIPWRYPAKRELQFGEWQRNDILAGIFEPAMIDIDLAILLTKAREHSVALVGPAAEEFFDPVPEQDLFEALRETLKLWNSQPDWAGDERNVVLTLSRIWYSAITGKIAPKDVAADWAIKRLPAQYQPVLLEAKQAYLGQKEDHLASRADHLEEFIRFVKGEIIKSVGK.

It carries out the reaction streptomycin + ATP = 3''-O-adenylylstreptomycin + diphosphate. It catalyses the reaction spectinomycin + ATP = 9-O-adenylylspectinomycin + diphosphate. Mediates bacterial resistance to the antibiotic spectinomycin and probably also to streptomycin. This Rhizobium radiobacter (Agrobacterium tumefaciens) protein is Aminoglycoside (3'') (9) adenylyltransferase.